The following is a 274-amino-acid chain: MSYSALEAAIEAAWEARETITPATKGETREAIEATLEALDKGSLRVAEKRGADWHVNQWAKKAVLLGFRLKDMEVQTGGPQAGTWWDKVDSKFAQWGEAQWKAAGFRAVPNCIVRRSAYIARGVVLMPSFVNLGAYVDESTMVDTWATVGSCAQIGKNVHLSGGVGIGGVLEPMQAGPTIIEDNCFIGARSEVVEGCIVREGSVLGMGVFIGKSTKIVDRETGEVMYGEVPAGSVVVAGSMPSKGGVNLYCAVIVKRVDAQTRSKTSINELLRD.

Arg-107 and Asp-144 together coordinate substrate.

It belongs to the transferase hexapeptide repeat family. As to quaternary structure, homotrimer.

It is found in the cytoplasm. It carries out the reaction (S)-2,3,4,5-tetrahydrodipicolinate + succinyl-CoA + H2O = (S)-2-succinylamino-6-oxoheptanedioate + CoA. It functions in the pathway amino-acid biosynthesis; L-lysine biosynthesis via DAP pathway; LL-2,6-diaminopimelate from (S)-tetrahydrodipicolinate (succinylase route): step 1/3. This chain is 2,3,4,5-tetrahydropyridine-2,6-dicarboxylate N-succinyltransferase, found in Cereibacter sphaeroides (strain ATCC 17029 / ATH 2.4.9) (Rhodobacter sphaeroides).